A 399-amino-acid chain; its full sequence is Probable protein phosphatase 2C 28 (399 aa).

The 309-residue stretch at 48–356 folds into the PPM-type phosphatase domain; it reads EFSMAVVQAN…DDITVIVVFL (309 aa). 4 residues coordinate Mn(2+): Asp87, Gly88, Asp288, and Asp347.

Belongs to the PP2C family. Mg(2+) is required as a cofactor. The cofactor is Mn(2+).

It carries out the reaction O-phospho-L-seryl-[protein] + H2O = L-seryl-[protein] + phosphate. It catalyses the reaction O-phospho-L-threonyl-[protein] + H2O = L-threonyl-[protein] + phosphate. The polypeptide is Probable protein phosphatase 2C 28 (Oryza sativa subsp. japonica (Rice)).